A 341-amino-acid polypeptide reads, in one-letter code: Anthranilate phosphoribosyltransferase (341 aa).

5-phospho-alpha-D-ribose 1-diphosphate-binding positions include Gly-84, 87 to 88 (GD), Thr-92, 94 to 97 (NIST), 112 to 120 (KHGNRSVSS), and Ser-124. Gly-84 lines the anthranilate pocket. Ser-96 serves as a coordination point for Mg(2+). Position 115 (Asn-115) interacts with anthranilate. Residue Arg-170 participates in anthranilate binding. The Mg(2+) site is built by Asp-229 and Glu-230.

Belongs to the anthranilate phosphoribosyltransferase family. Homodimer. Mg(2+) serves as cofactor.

It catalyses the reaction N-(5-phospho-beta-D-ribosyl)anthranilate + diphosphate = 5-phospho-alpha-D-ribose 1-diphosphate + anthranilate. Its pathway is amino-acid biosynthesis; L-tryptophan biosynthesis; L-tryptophan from chorismate: step 2/5. Its function is as follows. Catalyzes the transfer of the phosphoribosyl group of 5-phosphorylribose-1-pyrophosphate (PRPP) to anthranilate to yield N-(5'-phosphoribosyl)-anthranilate (PRA). This chain is Anthranilate phosphoribosyltransferase, found in Polynucleobacter necessarius subsp. necessarius (strain STIR1).